The following is a 196-amino-acid chain: Imidazoleglycerol-phosphate dehydratase (196 aa).

The protein belongs to the imidazoleglycerol-phosphate dehydratase family.

It is found in the cytoplasm. The enzyme catalyses D-erythro-1-(imidazol-4-yl)glycerol 3-phosphate = 3-(imidazol-4-yl)-2-oxopropyl phosphate + H2O. It functions in the pathway amino-acid biosynthesis; L-histidine biosynthesis; L-histidine from 5-phospho-alpha-D-ribose 1-diphosphate: step 6/9. This Caulobacter sp. (strain K31) protein is Imidazoleglycerol-phosphate dehydratase.